Reading from the N-terminus, the 316-residue chain is Acetyl-coenzyme A carboxylase carboxyl transferase subunit alpha (316 aa).

In terms of domain architecture, CoA carboxyltransferase C-terminal spans 36 to 290; that stretch reads KLEQKLDSLK…KQFLVEQLHI (255 aa).

It belongs to the AccA family. In terms of assembly, acetyl-CoA carboxylase is a heterohexamer composed of biotin carboxyl carrier protein (AccB), biotin carboxylase (AccC) and two subunits each of ACCase subunit alpha (AccA) and ACCase subunit beta (AccD).

Its subcellular location is the cytoplasm. It carries out the reaction N(6)-carboxybiotinyl-L-lysyl-[protein] + acetyl-CoA = N(6)-biotinyl-L-lysyl-[protein] + malonyl-CoA. It functions in the pathway lipid metabolism; malonyl-CoA biosynthesis; malonyl-CoA from acetyl-CoA: step 1/1. In terms of biological role, component of the acetyl coenzyme A carboxylase (ACC) complex. First, biotin carboxylase catalyzes the carboxylation of biotin on its carrier protein (BCCP) and then the CO(2) group is transferred by the carboxyltransferase to acetyl-CoA to form malonyl-CoA. The polypeptide is Acetyl-coenzyme A carboxylase carboxyl transferase subunit alpha (Protochlamydia amoebophila (strain UWE25)).